The sequence spans 1048 residues: Protein argonaute 7 (1048 aa).

The segment covering Met1 to Asp14 has biased composition (basic and acidic residues). Disordered regions lie at residues Met1–Gly50 and Lys121–Pro141. A compositionally biased stretch (gly residues) spans Ala16 to Ala37. A compositionally biased stretch (basic residues) spans Met131 to Pro141. A PAZ domain is found at Lys422 to Glu530. Residues Leu709–Glu1017 enclose the Piwi domain.

This sequence belongs to the argonaute family. Ago subfamily. Expressed in the reproductive shoot apex.

Functionally, involved in the RNA silencing pathway. May bind to short RNAs such as microRNAs (miRNAs) or short interfering RNAs (siRNAs), and represses the translation of mRNAs which are complementary to them. Regulates shoot apical meristem (SAM) initiation and maintenance and leaf polarization through the trans-acting siRNAS (ta-siRNAs) pathway which probably modulates the expression of the ARF2, ARF3, ARF4, ARF14 and ARF15 genes. This chain is Protein argonaute 7 (AGO7), found in Oryza sativa subsp. japonica (Rice).